The sequence spans 342 residues: MEDLQLVLFILGAIAIVAVLVHGFWSIRRQQPKSLKDSPMGNFYKQQADKESPPKRVDADGFDADGIGAVRVRKVGESNPHETPPISPYLKQDVKAEPKPLFKHTTSTEIKQEPVPQPDFSLQSPLATEQQRGAKVSRQEPVLNGHVPPLGQSHAAMVAQKALEQEKHAQSTTVPTQTALFDEDAYLENTESEDEYAEETVDEGLDEPRDVLVLHVVAKEGQQLNGAELLPCFLTLNFKYGDMNIFHRHVDNAGNGKVLFSIANMLKPGVFDPDNMEQFSTQGVVFFMTLPCYGDALMNFSIMLNSARQLADDIDAVVLDGQRQPWGEFTKQDYLHRIRANA.

At 1–6 the chain is on the periplasmic side; sequence MEDLQL. The helical transmembrane segment at 7-27 threads the bilayer; the sequence is VLFILGAIAIVAVLVHGFWSI. Residues 28–342 lie on the Cytoplasmic side of the membrane; sequence RRQQPKSLKD…DYLHRIRANA (315 aa). Residues 33-57 form a disordered region; that stretch reads KSLKDSPMGNFYKQQADKESPPKRV. The segment covering 47–57 has biased composition (basic and acidic residues); it reads QADKESPPKRV.

It belongs to the ZipA family. In terms of assembly, interacts with FtsZ via their C-terminal domains.

Its subcellular location is the cell inner membrane. In terms of biological role, essential cell division protein that stabilizes the FtsZ protofilaments by cross-linking them and that serves as a cytoplasmic membrane anchor for the Z ring. Also required for the recruitment to the septal ring of downstream cell division proteins. The chain is Cell division protein ZipA from Shewanella sp. (strain W3-18-1).